The chain runs to 202 residues: Coiled-coil domain-containing protein 69 (202 aa).

Positions 1–11 (MGCRQSRHSRG) are enriched in basic residues. Disordered stretches follow at residues 1-20 (MGCR…VEET) and 32-52 (GRIL…SNAQ). Residue Gly2 is the site of N-myristoyl glycine attachment. Residues 32-42 (GRILEGRHEEA) are compositionally biased toward basic and acidic residues. The residue at position 92 (Ser92) is a Phosphoserine. Residues 112 to 146 (WEQELESLHHVIEMKNERIHELEKQLFLLEMLKEK) are a coiled coil.

Belongs to the CCDC69 family.

The protein localises to the cytoplasm. Its subcellular location is the cytoskeleton. It localises to the spindle. It is found in the midbody. Functionally, may act as a scaffold to regulate the recruitment and assembly of spindle midzone components. Required for the localization of AURKB and PLK1 to the spindle midzone. This Mus musculus (Mouse) protein is Coiled-coil domain-containing protein 69 (Ccdc69).